Here is a 3333-residue protein sequence, read N- to C-terminus: Laminin subunit alpha-3 (3333 aa).

The first 35 residues, 1–35, serve as a signal peptide directing secretion; that stretch reads MAAAARPRGRALGPVLPPTPLLLLVLRVLPACGAT. One can recognise a Laminin N-terminal domain in the interval 43-298; the sequence is AGLSLHPTYF…SIKDISIGGQ (256 aa). N-linked (GlcNAc...) asparagine glycans are attached at residues Asn142 and Asn242. Residues 298 to 728 are domain V; the sequence is QCVCNGHAEV…NNYYFPDLHH (431 aa). 29 cysteine pairs are disulfide-bonded: Cys299-Cys308, Cys301-Cys319, Cys321-Cys330, Cys333-Cys353, Cys356-Cys365, Cys358-Cys390, Cys393-Cys402, Cys405-Cys423, Cys426-Cys436, Cys428-Cys443, Cys445-Cys454, Cys457-Cys467, Cys491-Cys503, Cys493-Cys509, Cys511-Cys520, Cys523-Cys533, Cys536-Cys548, Cys538-Cys555, Cys557-Cys566, Cys569-Cys586, Cys601-Cys610, Cys613-Cys628, Cys631-Cys645, Cys633-Cys652, Cys654-Cys663, Cys666-Cys681, Cys684-Cys696, Cys686-Cys703, and Cys705-Cys714. Laminin EGF-like domains lie at 299 to 355, 356 to 425, 426 to 469, 491 to 535, 536 to 588, 590 to 630, 631 to 683, and 684 to 728; these read CVCN…ECEA, CNCH…GCIP, CSCD…FCLR, CDCN…ICQA, CWCS…ACDP, GTIN…GCSE, CKCH…GCQG, and CQCD…DLHH. The domain IV 1 (domain IV B) stretch occupies residues 796-1265; the sequence is TEAVSGHITI…VAFYHKGALP (470 aa). Cystine bridges form between Cys1266-Cys1278, Cys1268-Cys1285, Cys1287-Cys1296, Cys1299-Cys1309, Cys1312-Cys1319, Cys1314-Cys1326, Cys1328-Cys1337, Cys1340-Cys1353, Cys1356-Cys1371, Cys1358-Cys1378, Cys1380-Cys1389, Cys1392-Cys1402, Cys1405-Cys1417, Cys1407-Cys1424, Cys1426-Cys1435, and Cys1438-Cys1453. Laminin EGF-like domains follow at residues 1266 to 1311, 1312 to 1355, 1356 to 1404, and 1405 to 1455; these read CECH…RCKP, CSCG…GCEG, CNCS…ECVP, and CNCN…GCTS. Residues 1266 to 1465 are domain III B; that stretch reads CECHPTGATG…CFCFGVNNQC (200 aa). Residues 1476-1653 enclose the Laminin IV type A domain; that stretch reads VDMLGWHLET…SGRIALAVEI (178 aa). Residues 1654–1821 form a domain III A region; sequence CACPPAYAGD…DSSPAEECDD (168 aa). 8 cysteine pairs are disulfide-bonded: Cys1687–Cys1696, Cys1689–Cys1703, Cys1706–Cys1715, Cys1718–Cys1731, Cys1734–Cys1746, Cys1736–Cys1755, Cys1757–Cys1766, and Cys1769–Cys1784. 2 Laminin EGF-like domains span residues 1687–1733 and 1734–1786; these read CNCN…SCRA and CPCP…SCQP. The region spanning 1787 to 1821 is the Laminin EGF-like 15; truncated domain; the sequence is CSCNSNGQLGSCHPLTGDCINQEPKDSSPAEECDD. A domain II and I region spans residues 1822–2389; it reads CDSCVMTLLN…ARDAASKVAV (568 aa). Coiled-coil stretches lie at residues 1852–1941 and 1987–2169; these read ASAG…KNVI and KHLR…DELV. Positions 2278 to 2280 match the Cell attachment site motif; that stretch reads RGD. A coiled-coil region spans residues 2322 to 2388; the sequence is RTQNEDFKKA…QARDAASKVA (67 aa). Asn2365, Asn2502, and Asn2584 each carry an N-linked (GlcNAc...) asparagine glycan. 5 consecutive Laminin G-like domains span residues 2390-2591, 2598-2760, 2767-2927, 2986-3150, and 3157-3330; these read PMRF…VEPC, SDKN…TKKC, VRSA…LGGC, ALQF…VSSC, and KGIY…LNGC. Cystine bridges form between Cys2561-Cys2591, Cys2737-Cys2760, Cys2895-Cys2927, Cys3127-Cys3150, and Cys3302-Cys3330.

Laminin is a complex glycoprotein, consisting of three different polypeptide chains (alpha, beta, gamma), which are bound to each other by disulfide bonds into a cross-shaped molecule comprising one long and three short arms with globules at each end. Alpha-3 is a subunit of laminin-5 (laminin-332 or epiligrin/kalinin/nicein), laminin-6 (laminin-311 or K-laminin) and laminin-7 (laminin-321 or KS-laminin). Skin; respiratory, urinary, and digestive epithelia and in other specialized tissues with prominent secretory or protective functions. Epithelial basement membrane, and epithelial cell tongue that migrates into a wound bed. A differential and focal expression of the subunit alpha-3 is observed in the CNS.

Its subcellular location is the secreted. It localises to the extracellular space. The protein localises to the extracellular matrix. The protein resides in the basement membrane. Functionally, binding to cells via a high affinity receptor, laminin is thought to mediate the attachment, migration and organization of cells into tissues during embryonic development by interacting with other extracellular matrix components. Its function is as follows. Laminin-5 is thought to be involved in (1) cell adhesion via integrin alpha-3/beta-1 in focal adhesion and integrin alpha-6/beta-4 in hemidesmosomes, (2) signal transduction via tyrosine phosphorylation of pp125-FAK and p80, (3) differentiation of keratinocytes. The chain is Laminin subunit alpha-3 (LAMA3) from Homo sapiens (Human).